The chain runs to 513 residues: 2,3-bisphosphoglycerate-independent phosphoglycerate mutase (513 aa).

2 residues coordinate Mn(2+): aspartate 13 and serine 63. Serine 63 serves as the catalytic Phosphoserine intermediate. Substrate contacts are provided by residues histidine 124, arginine 154–aspartate 155, arginine 186, arginine 192, arginine 262–arginine 265, and lysine 335. Mn(2+)-binding residues include aspartate 402, histidine 406, aspartate 443, histidine 444, and histidine 462.

It belongs to the BPG-independent phosphoglycerate mutase family. In terms of assembly, monomer. Requires Mn(2+) as cofactor.

It carries out the reaction (2R)-2-phosphoglycerate = (2R)-3-phosphoglycerate. It functions in the pathway carbohydrate degradation; glycolysis; pyruvate from D-glyceraldehyde 3-phosphate: step 3/5. In terms of biological role, catalyzes the interconversion of 2-phosphoglycerate and 3-phosphoglycerate. This chain is 2,3-bisphosphoglycerate-independent phosphoglycerate mutase, found in Shewanella amazonensis (strain ATCC BAA-1098 / SB2B).